The following is a 699-amino-acid chain: Elongation factor G (699 aa).

Residues 8–288 (EDYRNFGIMA…AVVDYLPSPM (281 aa)) form the tr-type G domain. Residues 17–24 (AHIDAGKT), 86–90 (DTPGH), and 140–143 (NKMD) contribute to the GTP site.

It belongs to the TRAFAC class translation factor GTPase superfamily. Classic translation factor GTPase family. EF-G/EF-2 subfamily.

The protein resides in the cytoplasm. Functionally, catalyzes the GTP-dependent ribosomal translocation step during translation elongation. During this step, the ribosome changes from the pre-translocational (PRE) to the post-translocational (POST) state as the newly formed A-site-bound peptidyl-tRNA and P-site-bound deacylated tRNA move to the P and E sites, respectively. Catalyzes the coordinated movement of the two tRNA molecules, the mRNA and conformational changes in the ribosome. This is Elongation factor G from Rhizobium johnstonii (strain DSM 114642 / LMG 32736 / 3841) (Rhizobium leguminosarum bv. viciae).